A 431-amino-acid chain; its full sequence is Serine--tRNA ligase (431 aa).

The interval 41-66 (QSRTQELQAERNARSKSIGEAARRGE) is disordered. Residue 240-242 (TSE) coordinates L-serine. 271 to 273 (RSE) is an ATP binding site. Glu-294 lines the L-serine pocket. 358-361 (EISS) is an ATP binding site. Ser-392 is a binding site for L-serine.

The protein belongs to the class-II aminoacyl-tRNA synthetase family. Type-1 seryl-tRNA synthetase subfamily. Homodimer. The tRNA molecule binds across the dimer.

The protein localises to the cytoplasm. The enzyme catalyses tRNA(Ser) + L-serine + ATP = L-seryl-tRNA(Ser) + AMP + diphosphate + H(+). It carries out the reaction tRNA(Sec) + L-serine + ATP = L-seryl-tRNA(Sec) + AMP + diphosphate + H(+). The protein operates within aminoacyl-tRNA biosynthesis; selenocysteinyl-tRNA(Sec) biosynthesis; L-seryl-tRNA(Sec) from L-serine and tRNA(Sec): step 1/1. In terms of biological role, catalyzes the attachment of serine to tRNA(Ser). Is also able to aminoacylate tRNA(Sec) with serine, to form the misacylated tRNA L-seryl-tRNA(Sec), which will be further converted into selenocysteinyl-tRNA(Sec). The polypeptide is Serine--tRNA ligase (Aeromonas salmonicida (strain A449)).